The following is a 260-amino-acid chain: Carbonic anhydrase 2 (260 aa).

Residues 3–259 (HHWGYDSHNG…LKSREVRASF (257 aa)) enclose the Alpha-carbonic anhydrase domain. Residue histidine 64 is the Proton donor/acceptor of the active site. Histidine 94, histidine 96, and histidine 119 together coordinate Zn(2+). Position 198 to 199 (198 to 199 (TT)) interacts with substrate.

This sequence belongs to the alpha-carbonic anhydrase family. Requires Zn(2+) as cofactor.

The protein localises to the cytoplasm. Its subcellular location is the cell membrane. The enzyme catalyses hydrogencarbonate + H(+) = CO2 + H2O. It carries out the reaction urea = cyanamide + H2O. Its activity is regulated as follows. Inhibited by acetazolamide. Its function is as follows. Catalyzes the reversible hydration of carbon dioxide. Can also hydrate cyanamide to urea. The polypeptide is Carbonic anhydrase 2 (CA2) (Gallus gallus (Chicken)).